We begin with the raw amino-acid sequence, 1025 residues long: RNA cytidine acetyltransferase (1025 aa).

287 to 296 (GRGKSAALGL) contributes to the ATP binding site. Lysine 426 is modified (N6-acetyllysine). Arginine 470 lines the ATP pocket. The N-acetyltransferase domain maps to 558–753 (CLLPPVPPTQ…HSCIMLKTLT (196 aa)). Residues 629–631 (IAV) and 636–642 (QGMGYGS) each bind acetyl-CoA. The tract at residues 702–1025 (PAERLDYLGV…KKDMKLKRKK (324 aa)) is required for localization to the nucleolus and midbody. Position 716 is a phosphothreonine (threonine 716). Arginine 725 provides a ligand contact to acetyl-CoA. Phosphoserine occurs at positions 934, 984, and 987. The tract at residues 990–1025 (SDKKRKLEAKQEPKQSKKLKNRETKNKKDMKLKRKK) is disordered. Positions 997–1018 (EAKQEPKQSKKLKNRETKNKKD) are enriched in basic and acidic residues.

Belongs to the RNA cytidine acetyltransferase family. NAT10 subfamily. Part of the small subunit (SSU) processome, composed of more than 70 proteins and the RNA chaperone small nucleolar RNA (snoRNA) U3. Interacts with THUMPD1. Interacts with SUN1 (via N-terminus). Interacts with TERT. Post-translationally, acetylation at Lys-426 is required to activation of rRNA transcription. May be autoacetylated; however ability to autoacetylate in vivo requires additional evidences.

It is found in the nucleus. The protein resides in the nucleolus. The protein localises to the midbody. It carries out the reaction a cytidine in 18S rRNA + acetyl-CoA + ATP + H2O = an N(4)-acetylcytidine in 18S rRNA + ADP + phosphate + CoA + H(+). It catalyses the reaction a cytidine in tRNA + acetyl-CoA + ATP + H2O = an N(4)-acetylcytidine in tRNA + ADP + phosphate + CoA + H(+). The catalysed reaction is a cytidine in mRNA + acetyl-CoA + ATP + H2O = an N(4)-acetylcytidine in mRNA + ADP + phosphate + CoA + H(+). Its activity is regulated as follows. Specifically inhibited by remodelin (4-[2-(2-cyclopentylidenehydrazinyl)-4-thiazolyl]-benzonitrile, monohydrobromide), a hydrobromide salt molecule. Remodelin can improve nuclear architecture, chromatin organization and fitness of cells from patients suffering from Hutchinson-Gilford progeria syndrome (HGPS); molecular mechanisms explaining the relation between NAT10 activity and nuclear architecture are however unclear. Functionally, RNA cytidine acetyltransferase that catalyzes the formation of N(4)-acetylcytidine (ac4C) modification on mRNAs, 18S rRNA and tRNAs. Catalyzes ac4C modification of a broad range of mRNAs, enhancing mRNA stability and translation. mRNA ac4C modification is frequently present within wobble cytidine sites and promotes translation efficiency. Mediates the formation of ac4C at position 1842 in 18S rRNA. May also catalyze the formation of ac4C at position 1337 in 18S rRNA. Required for early nucleolar cleavages of precursor rRNA at sites A0, A1 and A2 during 18S rRNA synthesis. Catalyzes the formation of ac4C in serine and leucine tRNAs. Requires the tRNA-binding adapter protein THUMPD1 for full tRNA acetyltransferase activity but not for 18S rRNA acetylation. In addition to RNA acetyltransferase activity, also able to acetylate lysine residues of proteins, such as histones, microtubules, p53/TP53 and MDM2, in vitro. The relevance of the protein lysine acetyltransferase activity is however unsure in vivo. Activates telomerase activity by stimulating the transcription of TERT, and may also regulate telomerase function by affecting the balance of telomerase subunit assembly, disassembly, and localization. Involved in the regulation of centrosome duplication by acetylating CENATAC during mitosis, promoting SASS6 proteasome degradation. Part of the small subunit (SSU) processome, first precursor of the small eukaryotic ribosomal subunit. During the assembly of the SSU processome in the nucleolus, many ribosome biogenesis factors, an RNA chaperone and ribosomal proteins associate with the nascent pre-rRNA and work in concert to generate RNA folding, modifications, rearrangements and cleavage as well as targeted degradation of pre-ribosomal RNA by the RNA exosome. This is RNA cytidine acetyltransferase from Homo sapiens (Human).